The sequence spans 323 residues: Sphingomyelinase D (323 aa).

The first 20 residues, 1–20, serve as a signal peptide directing secretion; sequence MISLLRLCSFLAAGSILVQG. Residue H59 is part of the active site. Residues E79, D81, and D127 each contribute to the Mg(2+) site. Residues 308–315 carry the SMD-tail motif; the sequence is ATNDDNPW.

This sequence belongs to the sphingomyelinase D/phospholipase D family. Mg(2+) is required as a cofactor.

The protein localises to the secreted. The catalysed reaction is a sphingomyelin + H2O = an N-acylsphing-4-enine 1-phosphate + choline + H(+). Catalyzes the hydrolysis of sphingomyelin. Sphingomyelinases D are produced by some spider in their venoms, but also by arthropods such as ticks, or pathogenic bacteria and fungi. They might play a role in pathogenicity through different mechanisms, such as membrane destabilization and host cell penetration, but also pulmonary inflammation and cutaneous lesions. The chain is Sphingomyelinase D from Trichophyton rubrum (strain ATCC MYA-4607 / CBS 118892) (Athlete's foot fungus).